We begin with the raw amino-acid sequence, 432 residues long: Serine/threonine-protein phosphatase 2A activator 1 (432 aa).

Belongs to the PTPA-type PPIase family.

The protein resides in the cytoplasm. It is found in the nucleus. It catalyses the reaction [protein]-peptidylproline (omega=180) = [protein]-peptidylproline (omega=0). PPIases accelerate the folding of proteins. It catalyzes the cis-trans isomerization of proline imidic peptide bonds in oligopeptides. Acts as a regulatory subunit for PP2A-like phosphatases modulating their activity or substrate specificity, probably by inducing a conformational change in the catalytic subunit, a direct target of the PPIase. Can reactivate inactive phosphatase PP2A-phosphatase methylesterase complexes (PP2Ai) in presence of ATP and Mg(2+) by dissociating the inactive form from the complex. The chain is Serine/threonine-protein phosphatase 2A activator 1 (rrd1) from Emericella nidulans (strain FGSC A4 / ATCC 38163 / CBS 112.46 / NRRL 194 / M139) (Aspergillus nidulans).